Consider the following 157-residue polypeptide: Heavy metal-associated isoprenylated plant protein 16 (157 aa).

Residues 2 to 71 enclose the HMA domain; that stretch reads KQKILIRIAM…KVAFAELVSV (70 aa). The tract at residues 73 to 115 is disordered; the sequence is KVEPPKDGDKKPEEEKKPEEKKPEEKKPEEKKPEPCCQPWQKP. The span at 75–106 shows a compositional bias: basic and acidic residues; sequence EPPKDGDKKPEEEKKPEEKKPEEKKPEEKKPE. Residue cysteine 154 is modified to Cysteine methyl ester. Cysteine 154 carries S-farnesyl cysteine lipidation. The propeptide at 155–157 is removed in mature form; sequence RIM.

The protein belongs to the HIPP family.

Its function is as follows. Probable heavy-metal-binding protein. The sequence is that of Heavy metal-associated isoprenylated plant protein 16 from Arabidopsis thaliana (Mouse-ear cress).